We begin with the raw amino-acid sequence, 262 residues long: uncharacterized protein (262 aa).

This is an uncharacterized protein from Acanthamoeba polyphaga mimivirus (APMV).